A 268-amino-acid chain; its full sequence is Putative type I specificity subunit S.MpnORF365P (268 aa).

The protein belongs to the type-I restriction system S methylase family. In terms of assembly, the methyltransferase is composed of M and S polypeptides.

The specificity (S) subunit of a type I methyltransferase (MTase); this subunit dictates DNA sequence specificity. The single R subunit has multiple frameshifts and is probably not expressed. In Mycoplasma pneumoniae (strain ATCC 29342 / M129 / Subtype 1) (Mycoplasmoides pneumoniae), this protein is Putative type I specificity subunit S.MpnORF365P.